The primary structure comprises 448 residues: Hyaluronidase conohyal-Cn1 (448 aa).

The N-terminal stretch at 1 to 18 is a signal peptide; sequence MRAVVVVTGLVVVVVATA. Residues 19-33 constitute a propeptide that is removed on maturation; that stretch reads LSLPNHDVKSATSSR. The disordered stretch occupies residues 26 to 55; that stretch reads VKSATSSRSSSDYQGSSGDDCDEGLPPPDQ. The span at 31 to 43 shows a compositional bias: low complexity; that stretch reads SSRSSSDYQGSSG. The cysteines at positions 67 and 344 are disulfide-linked. Asn-141 carries N-linked (GlcNAc...) asparagine glycosylation. Glu-151 acts as the Proton donor in catalysis. N-linked (GlcNAc...) asparagine glycosylation is found at Asn-169 and Asn-361. Disulfide bonds link Cys-369–Cys-380, Cys-374–Cys-413, and Cys-415–Cys-424. Positions 413–424 constitute an EGF-like domain; the sequence is CRCYSAWEGACC.

The protein belongs to the glycosyl hydrolase 56 family. As to expression, expressed by the venom duct.

Its subcellular location is the secreted. The enzyme catalyses Random hydrolysis of (1-&gt;4)-linkages between N-acetyl-beta-D-glucosamine and D-glucuronate residues in hyaluronate.. Its function is as follows. Hyaluronidase catalyzes the hydrolysis of hyaluronic acid (HA), an anionic, nonsulfated glycosaminoglycan distributed widely throughout connective, epithelial, and neural tissues. In venom, they are known to enhance diffusion of the venom by degrading the extracellular matrix. In Conus consors (Singed cone), this protein is Hyaluronidase conohyal-Cn1.